Consider the following 438-residue polypeptide: AP-2 complex subunit mu (438 aa).

The 261-residue stretch at 177–437 folds into the MHD domain; it reads KNEVFLDIVE…ITKAGSYEIR (261 aa).

It belongs to the adaptor complexes medium subunit family. In terms of assembly, adaptor protein complex 2 (AP-2) is a heterotetramer composed of two large adaptins (alpha-type and beta-type subunits), a medium adaptin (mu-type subunit) and a small adaptin (sigma-type subunit).

The protein localises to the cell membrane. It localises to the membrane. It is found in the coated pit. The protein resides in the golgi apparatus. Its subcellular location is the trans-Golgi network membrane. Functionally, subunit of the adaptor protein complex 2 (AP-2). Adaptor protein complexes function in protein transport via transport vesicles in different membrane traffic pathways. Adaptor protein complexes are vesicle coat components and appear to be involved in cargo selection and vesicle formation. AP-2 is involved in clathrin-dependent endocytosis in which cargo proteins are incorporated into vesicles surrounded by clathrin (clathrin-coated vesicles, CCVs) which are destined for fusion with the early endosome. AP-2 recognizes Y-X-X-Phi endocytosis signal motif within the cytosolic tails of transmembrane cargo molecules. The complex binds polyphosphoinositides. This Arabidopsis thaliana (Mouse-ear cress) protein is AP-2 complex subunit mu (AP2M).